The sequence spans 705 residues: Phosphatidylinositol 4-phosphate 5-kinase 3 (705 aa).

MORN repeat units lie at residues Y58–M80, Y81–T103, Y104–T126, Y127–G149, Y150–E172, Y173–R195, and Y196–T218. One can recognise a PIPK domain in the interval T321–F701. The segment at Y661–S682 is activation loop.

The protein localises to the cell membrane. It carries out the reaction a 1,2-diacyl-sn-glycero-3-phospho-(1D-myo-inositol 4-phosphate) + ATP = a 1,2-diacyl-sn-glycero-3-phospho-(1D-myo-inositol-4,5-bisphosphate) + ADP + H(+). Its function is as follows. With DRP1A and DRP2B, required for the precise coordination of polar ARAC3/ROP6 and ARAC4/ROP2 placement and subsequent root hair positioning during planar polarity formation in root hair-forming cells, probably by mediating the correct basal-to-planar polarity switching of D6PK into the polar, lipid-enriched domain. This Arabidopsis thaliana (Mouse-ear cress) protein is Phosphatidylinositol 4-phosphate 5-kinase 3.